Reading from the N-terminus, the 199-residue chain is Outer-membrane lipoprotein LolB (199 aa).

An N-terminal signal peptide occupies residues M1–G28. A lipid anchor (N-palmitoyl cysteine) is attached at C29. The S-diacylglycerol cysteine moiety is linked to residue C29.

It belongs to the LolB family. Monomer.

It is found in the cell outer membrane. In terms of biological role, plays a critical role in the incorporation of lipoproteins in the outer membrane after they are released by the LolA protein. In Bordetella bronchiseptica (strain ATCC BAA-588 / NCTC 13252 / RB50) (Alcaligenes bronchisepticus), this protein is Outer-membrane lipoprotein LolB.